The sequence spans 97 residues: Co-chaperonin GroES (97 aa).

The protein belongs to the GroES chaperonin family. In terms of assembly, heptamer of 7 subunits arranged in a ring. Interacts with the chaperonin GroEL.

The protein resides in the cytoplasm. Functionally, together with the chaperonin GroEL, plays an essential role in assisting protein folding. The GroEL-GroES system forms a nano-cage that allows encapsulation of the non-native substrate proteins and provides a physical environment optimized to promote and accelerate protein folding. GroES binds to the apical surface of the GroEL ring, thereby capping the opening of the GroEL channel. This Stutzerimonas stutzeri (strain A1501) (Pseudomonas stutzeri) protein is Co-chaperonin GroES.